The following is a 349-amino-acid chain: Eukaryotic translation initiation factor 3 subunit I (349 aa).

WD repeat units follow at residues glycine 8–glutamate 49, histidine 51–glutamate 91, proline 93–lysine 135, serine 148–threonine 187, glutamate 197–lysine 239, and glycine 295–aspartate 336.

The protein belongs to the eIF-3 subunit I family. As to quaternary structure, component of the eukaryotic translation initiation factor 3 (eIF-3) complex.

The protein localises to the cytoplasm. Component of the eukaryotic translation initiation factor 3 (eIF-3) complex, which is involved in protein synthesis of a specialized repertoire of mRNAs and, together with other initiation factors, stimulates binding of mRNA and methionyl-tRNAi to the 40S ribosome. The eIF-3 complex specifically targets and initiates translation of a subset of mRNAs involved in cell proliferation. The chain is Eukaryotic translation initiation factor 3 subunit I from Debaryomyces hansenii (strain ATCC 36239 / CBS 767 / BCRC 21394 / JCM 1990 / NBRC 0083 / IGC 2968) (Yeast).